A 224-amino-acid chain; its full sequence is Octanoyl-[acyl-carrier-protein]:protein N-octanoyltransferase LIPT2, mitochondrial (224 aa).

One can recognise a BPL/LPL catalytic domain in the interval 37–217; sequence SNIPNTLLLC…AFTEQFNCTL (181 aa). Residues 81 to 88, 147 to 149, and 160 to 162 each bind substrate; these read RGGLITFH, AIG, and GLA. The active-site Acyl-thioester intermediate is the Cys-178.

The protein belongs to the LipB family.

The protein resides in the mitochondrion. The catalysed reaction is octanoyl-[ACP] + L-lysyl-[protein] = N(6)-octanoyl-L-lysyl-[protein] + holo-[ACP] + H(+). The protein operates within protein modification; protein lipoylation via endogenous pathway; protein N(6)-(lipoyl)lysine from octanoyl-[acyl-carrier-protein]: step 1/2. Its function is as follows. Catalyzes the transfer of endogenously produced octanoic acid from octanoyl-acyl-carrier-protein (octanoyl-ACP) onto the lipoyl domains of lipoate-dependent enzymes such as the protein H of the glycine cleavage system (GCSH). Lipoyl-ACP can also act as a substrate although octanoyl-ACP is likely to be the physiological substrate. This chain is Octanoyl-[acyl-carrier-protein]:protein N-octanoyltransferase LIPT2, mitochondrial (lipt2), found in Danio rerio (Zebrafish).